The primary structure comprises 733 residues: MAEVGEDSGARALLALRSAPCSPVLCAAAAAAAFPAAAPPPAPAQPQPPPGPPPPPPPPLPPGAIAGAGSSGGSSGVSGDSAVAGAAPALVAAAAASVRQSPGPALARLEGREFEFLMRQPSVTIGRNSSQGSVDLSMGLSSFISRRHLQLSFQEPHFYLRCLGKNGVFVDGAFQRRGAPALQLPKQCTFRFPSTAIKIQFTSLYHKEEAPASPLRPLYPQISPLKIHIPEPDLRSMVSPVPSPTGTISVPNSCPASPRGAGSSSYRFVQNVTSDLQLAAEFAAKAASEQQADTSGGDSPKDESKPPFSYAQLIVQAISSAQDRQLTLSGIYAHITKHYPYYRTADKGWQNSIRHNLSLNRYFIKVPRSQEEPGKGSFWRIDPASEAKLVEQAFRKRRQRGVSCFRTPFGPLSSRSAPASPTHPGLMSPRSGGLQTPECLSREGSPIPHDPEFGSKLASVPEYRYSQSAPGSPVSAQPVIMAVPPRPSSLVAKPVAYMPASIVTSQQPAGHAIHVVQQAPTVTMVRVVTTSANSANGYILTSQGAAGGSHDAAGAAVLDLGSEARGLEEKPTIAFATIPAAGGVIQTVASQMAPGVPGHTVTILQPATPVTLGQHHLPVRAVTQNGKHAVPTNSLAGNAYALTSPLQLLATQASSSAPVVVTRVCEVGPKEPAAAVAATATTTPATATTASASASSTGEPEVKRSRVEEPSGAVTTPAGVIAAAGPQGPGTGE.

At A2 the chain carries N-acetylalanine. Positions 2 to 40 (AEVGEDSGARALLALRSAPCSPVLCAAAAAAAFPAAAPP) are interaction with SIN3A and SIN3B. Residues 36–79 (AAAPPPAPAQPQPPPGPPPPPPPPLPPGAIAGAGSSGGSSGVSG) are disordered. Residues 37–62 (AAPPPAPAQPQPPPGPPPPPPPPLPP) show a composition bias toward pro residues. The required for interaction with FOXO4 and MEF2C stretch occupies residues 95-420 (AASVRQSPGP…PLSSRSAPAS (326 aa)). Phosphoserine is present on S101. Residues 123 to 175 (VTIGRNSSQGSVDLSMGLSSFISRRHLQLSFQEPHFYLRCLGKNGVFVDGAFQ) enclose the FHA domain. An omega-N-methylarginine mark is found at R161 and R191. Phosphoserine occurs at positions 213, 223, 239, and 243. T245 and T247 each carry phosphothreonine. A phosphoserine mark is found at S253, S257, S295, and S299. Disordered regions lie at residues 287 to 306 (ASEQ…ESKP) and 413 to 436 (SSRS…GLQT). The fork-head DNA-binding region spans 305-400 (KPPFSYAQLI…EQAFRKRRQR (96 aa)). 2 positions are modified to phosphoserine: S416 and S420. Residue T422 is modified to Phosphothreonine. S428 is modified (phosphoserine). Phosphothreonine is present on T436. A phosphoserine mark is found at S441, S445, and S459. Over residues 676 to 697 (VAATATTTPATATTASASASST) the composition is skewed to low complexity. The interval 676 to 733 (VAATATTTPATATTASASASSTGEPEVKRSRVEEPSGAVTTPAGVIAAAGPQGPGTGE) is disordered. Residues 700–709 (PEVKRSRVEE) show a composition bias toward basic and acidic residues.

In terms of assembly, interacts with SIN3A and SIN3B (via PAH2) to form a complex which represses transcription. Component of SIN3A-, but not SIN3B-, containing multiprotein complexes. Interacts with FOXO4 and MEF2C; both interactions inhibit FOXO4 and MEF2C transactivation activity. Interacts (when phosphorylated) with YWHAE/14-3-3-epsilon; promotes sequestration in the cytoplasm and leads to impaired ability to bind DNA. Interacts with FHL2. Interacts with SRF. Interacts with DVL2 and DVL3; the interaction induces DVL2 nuclear translocation. Interacts with BAP1 (when phosphorylated). Accessory component of the polycomb repressive deubiquitinase (PR-DUB) complex, at least composed of BAP1, one of ASXL1, ASXL2 or (probably) ASXL3 and one of MBD5 or MBD6. The PR-DUB core associates with a number of accessory proteins, including FOXK1, FOXK2, KDM1B, HCFC1 and OGT. In terms of processing, phosphorylation by GSK3 (GSK3A or GSK3B) promotes interaction with YWHAE/14-3-3-epsilon and retention in the cytoplasm. In response to mTORC1 signaling, phosphorylation by GSK3 is prevented, leading to translocation to the nucleus. As to expression, expressed both developing and adult tissues. In adults, significant expression is seen in tumors of the brain, colon and lymph node.

It localises to the nucleus. The protein localises to the cytoplasm. Its function is as follows. Transcriptional regulator involved in different processes such as glucose metabolism, aerobic glycolysis, muscle cell differentiation and autophagy. Recognizes and binds the forkhead DNA sequence motif (5'-GTAAACA-3') and can both act as a transcription activator or repressor, depending on the context. Together with FOXK2, acts as a key regulator of metabolic reprogramming towards aerobic glycolysis, a process in which glucose is converted to lactate in the presence of oxygen. Acts by promoting expression of enzymes for glycolysis (such as hexokinase-2 (HK2), phosphofructokinase, pyruvate kinase (PKLR) and lactate dehydrogenase), while suppressing further oxidation of pyruvate in the mitochondria by up-regulating pyruvate dehydrogenase kinases PDK1 and PDK4. Probably plays a role in gluconeogenesis during overnight fasting, when lactate from white adipose tissue and muscle is the main substrate. Involved in mTORC1-mediated metabolic reprogramming: in response to mTORC1 signaling, translocates into the nucleus and regulates the expression of genes associated with glycolysis and downstream anabolic pathways, such as HIF1A, thereby regulating glucose metabolism. Together with FOXK2, acts as a negative regulator of autophagy in skeletal muscle: in response to starvation, enters the nucleus, binds the promoters of autophagy genes and represses their expression, preventing proteolysis of skeletal muscle proteins. Acts as a transcriptional regulator of the myogenic progenitor cell population in skeletal muscle. Binds to the upstream enhancer region (CCAC box) of myoglobin (MB) gene, regulating the myogenic progenitor cell population. Promotes muscle progenitor cell proliferation by repressing the transcriptional activity of FOXO4, thereby inhibiting myogenic differentiation. Involved in remodeling processes of adult muscles that occur in response to physiological stimuli. Required to correct temporal orchestration of molecular and cellular events necessary for muscle repair. Represses myogenic differentiation by inhibiting MEFC activity. Positively regulates Wnt/beta-catenin signaling by translocating DVL into the nucleus. Reduces virus replication, probably by binding the interferon stimulated response element (ISRE) to promote antiviral gene expression. Accessory component of the polycomb repressive deubiquitinase (PR-DUB) complex; recruits the PR-DUB complex to specific FOXK1-bound genes. This is Forkhead box protein K1 from Homo sapiens (Human).